Here is a 161-residue protein sequence, read N- to C-terminus: RuBisCO chaperone RbcX (161 aa).

Disordered regions lie at residues M1–E20 and L130–D161. Residues D147–D161 show a composition bias toward polar residues.

It belongs to the RbcX family. Homodimer. Interacts with the exposed C-terminal peptide of endogenous RbcL ('Lys-460-Asp-470') via its central cleft, as well as C-terminal peptides from other cyanobacterial RbcL. Contacts a second RbcL monomer via its peripheral polar surface.

It localises to the carboxysome. It is found in the cytoplasm. Functionally, an RbcL-specific chaperone. The central cleft of the RbcX homodimer (RbcX2) binds the C-terminus of an RbcL monomer, stabilizing the C-terminus and probably preventing its reassociation with chaperonin GroEL-ES. At the same time the peripheral region of RbcX2 binds a second RbcL monomer, bridging the RbcL homodimers in the correct orientation. The RbcX2(2)-bound RbcL dimers then assemble into the RbcL8 core (RbcL8-(RbcX2)8). RbcS binding triggers the release of RbcX2. The polypeptide is RuBisCO chaperone RbcX (Synechococcus sp. (strain ATCC 27144 / PCC 6301 / SAUG 1402/1) (Anacystis nidulans)).